A 416-amino-acid polypeptide reads, in one-letter code: Phosphatidylinositol 5-phosphate 4-kinase type-2 gamma (416 aa).

The region spanning alanine 38–phenylalanine 415 is the PIPK domain.

In terms of processing, phosphorylated, phosphorylation is induced by EGF.

The protein resides in the endoplasmic reticulum. It is found in the cytoplasm. The catalysed reaction is a 1,2-diacyl-sn-glycero-3-phospho-(1D-myo-inositol-5-phosphate) + ATP = a 1,2-diacyl-sn-glycero-3-phospho-(1D-myo-inositol-4,5-bisphosphate) + ADP + H(+). It carries out the reaction 1,2-dihexadecanoyl-sn-glycero-3-phospho-(1D-myo-inositol-5-phosphate) + ATP = 1,2-dihexadecanoyl-sn-glycero-3-phospho-(1D-myo-inositol-4,5-bisphosphate) + ADP + H(+). The enzyme catalyses 1,2-dihexadecanoyl-sn-glycero-3-phospho-(1D-myo-inositol-5-phosphate) + GTP = 1,2-dihexadecanoyl-sn-glycero-3-phospho-(1D-myo-inositol-4,5-bisphosphate) + GDP + H(+). In terms of biological role, phosphatidylinositol 5-phosphate 4-kinase with low enzymatic activity. May be a GTP sensor, has higher GTP-dependent kinase activity than ATP-dependent kinase activity. In Danio rerio (Zebrafish), this protein is Phosphatidylinositol 5-phosphate 4-kinase type-2 gamma (pip4k2c).